We begin with the raw amino-acid sequence, 224 residues long: dTTP/UTP pyrophosphatase (224 aa).

Residue Asp-77 is the Proton acceptor of the active site.

The protein belongs to the Maf family. YhdE subfamily. A divalent metal cation is required as a cofactor.

The protein localises to the cytoplasm. The catalysed reaction is dTTP + H2O = dTMP + diphosphate + H(+). The enzyme catalyses UTP + H2O = UMP + diphosphate + H(+). Its function is as follows. Nucleoside triphosphate pyrophosphatase that hydrolyzes dTTP and UTP. May have a dual role in cell division arrest and in preventing the incorporation of modified nucleotides into cellular nucleic acids. The polypeptide is dTTP/UTP pyrophosphatase (Dehalococcoides mccartyi (strain CBDB1)).